A 380-amino-acid polypeptide reads, in one-letter code: 3-dehydroquinate synthase (380 aa).

NAD(+) is bound by residues 100-104 (GAASD), 124-125 (TT), lysine 137, and lysine 146. Zn(2+)-binding residues include glutamate 179, histidine 251, and histidine 267.

This sequence belongs to the sugar phosphate cyclases superfamily. Dehydroquinate synthase family. The cofactor is NAD(+). Co(2+) is required as a cofactor. Zn(2+) serves as cofactor.

It is found in the cytoplasm. The catalysed reaction is 7-phospho-2-dehydro-3-deoxy-D-arabino-heptonate = 3-dehydroquinate + phosphate. It functions in the pathway metabolic intermediate biosynthesis; chorismate biosynthesis; chorismate from D-erythrose 4-phosphate and phosphoenolpyruvate: step 2/7. In terms of biological role, catalyzes the conversion of 3-deoxy-D-arabino-heptulosonate 7-phosphate (DAHP) to dehydroquinate (DHQ). The polypeptide is 3-dehydroquinate synthase (Tropheryma whipplei (strain TW08/27) (Whipple's bacillus)).